The chain runs to 577 residues: MLAAQKQRLTELFQAAVAPLVASTDLQPTITLERPRDPSHGDVACNLAMQIAKPLKKNPREVAQALAAALLDNPANRDLIEAADIAGPGFINLRLTAASRQAVVKTVLQQGAEFGKSNLGNDKKVIIEFVSANPTGPLHVGHGRQGALGDAMSSLFQAQGYDVTREFYYNDAGVQIATLATSVQARGKGLKPGVEGWPESAYNGDYIQDIANDFLAKKTVSASNGEPVTASGDINDIESIRQFSVTYLRREQDLDLQAFGVKFDNYYLESSLYADGKVEKTVDALIKADKTYELDGALWLRTTDYRDDKDRVMKKSDGTYTYFVPDVAYHTVKWQRGFTQAINVQGSDHHGTIARVRAGLQALDIGIPQGYPDYVLHKMVTVMRNGEEVKISKRAGSYVTLRDLIEWSNGEVVDGEVRDLTRGRDAVRFFLISRKADTEFVFDVDIALTQGDENPVYYVQYAHARICSVLAQWTDGDEASLDKVDLSPLTAARETALLAKLAEYPETLQKALEELGPHQVAFYLRDLAGELHSYYNAERVLVDDEALKMARIALMSATRQVLRNGLALIGVSAPARM.

The short motif at 132–142 is the 'HIGH' region element; the sequence is ANPTGPLHVGH.

It belongs to the class-I aminoacyl-tRNA synthetase family. Monomer.

Its subcellular location is the cytoplasm. It catalyses the reaction tRNA(Arg) + L-arginine + ATP = L-arginyl-tRNA(Arg) + AMP + diphosphate. This Janthinobacterium sp. (strain Marseille) (Minibacterium massiliensis) protein is Arginine--tRNA ligase.